We begin with the raw amino-acid sequence, 79 residues long: MKLTCVLIITVLFLTASQLITADYSRGQRQYRAVRLGDEMRNFKGARDCGGQGEGCYTQPCCPGLRCRGGGTGGGSCQP.

An N-terminal signal peptide occupies residues 1–22; that stretch reads MKLTCVLIITVLFLTASQLITA. Positions 23-47 are excised as a propeptide; it reads DYSRGQRQYRAVRLGDEMRNFKGAR. Intrachain disulfides connect C49–C62, C56–C67, and C61–C77.

This sequence belongs to the conotoxin O1 superfamily. As to expression, expressed by the venom duct.

Its subcellular location is the secreted. The polypeptide is Conotoxin 8 (Conus vexillum (Flag cone)).